A 612-amino-acid chain; its full sequence is Siderophore iron transporter 1 (612 aa).

Phosphoserine occurs at positions 5, 21, 22, 36, and 41. The next 14 helical transmembrane spans lie at 91–111, 125–145, 159–179, 188–208, 218–238, 249–269, 299–319, 331–351, 365–385, 406–426, 434–453, 464–484, 495–515, and 573–593; these read ISFY…SFQA, FAGH…SAAI, LEAF…MAAS, GSVL…IFMA, LVLG…PRVA, WGIA…LAVY, IIGL…ISLA, FIVM…YEIF, EPTI…FYCW, YISY…GILI, WYFV…MIRY, IMPQ…LTVA, AIVT…GSAI, and ILTS…WFVA.

Belongs to the major facilitator superfamily.

The protein resides in the membrane. Involved in the transport of siderophore iron and so has a role in iron homeostasis. The polypeptide is Siderophore iron transporter 1 (str1) (Schizosaccharomyces pombe (strain 972 / ATCC 24843) (Fission yeast)).